A 598-amino-acid chain; its full sequence is ATP-dependent lipid A-core flippase (598 aa).

Polar residues predominate over residues 1-15 (MSQAYQPDSTKTSAK). Residues 1 to 21 (MSQAYQPDSTKTSAKTPVAPT) are disordered. Helical transmembrane passes span 44-64 (WWAI…EIWI), 85-105 (LFPF…FLGN), 172-192 (VVAL…ILFV), and 269-289 (INTP…VWLA). The 282-residue stretch at 48 to 329 (LLTIIGFAIN…LTDVNQQLQR (282 aa)) folds into the ABC transmembrane type-1 domain. The 236-residue stretch at 360–595 (IKLDNVSLVY…HGHYAQMYAR (236 aa)) folds into the ABC transporter domain. 393 to 400 (GRSGAGKS) contributes to the ATP binding site.

Belongs to the ABC transporter superfamily. Lipid exporter (TC 3.A.1.106) family. In terms of assembly, homodimer.

The protein resides in the cell inner membrane. The enzyme catalyses ATP + H2O + lipid A-core oligosaccharideSide 1 = ADP + phosphate + lipid A-core oligosaccharideSide 2.. Its function is as follows. Involved in lipopolysaccharide (LPS) biosynthesis. Translocates lipid A-core from the inner to the outer leaflet of the inner membrane. Transmembrane domains (TMD) form a pore in the inner membrane and the ATP-binding domain (NBD) is responsible for energy generation. This Psychrobacter cryohalolentis (strain ATCC BAA-1226 / DSM 17306 / VKM B-2378 / K5) protein is ATP-dependent lipid A-core flippase.